We begin with the raw amino-acid sequence, 148 residues long: Large ribosomal subunit protein bL9 (148 aa).

The protein belongs to the bacterial ribosomal protein bL9 family.

Its function is as follows. Binds to the 23S rRNA. This is Large ribosomal subunit protein bL9 from Acinetobacter baumannii (strain AB307-0294).